Reading from the N-terminus, the 344-residue chain is Oxygen sensor histidine kinase NreB (344 aa).

Positions 58, 61, 73, and 76 each coordinate [4Fe-4S] cluster. The Histidine kinase domain occupies Arg-152–Ile-344. Position 158 is a phosphohistidine; by autocatalysis (His-158).

Requires [4Fe-4S] cluster as cofactor. Post-translationally, autophosphorylated.

It is found in the cytoplasm. The catalysed reaction is ATP + protein L-histidine = ADP + protein N-phospho-L-histidine.. Member of the two-component regulatory system NreB/NreC involved in the control of dissimilatory nitrate/nitrite reduction in response to oxygen. NreB functions as a direct oxygen sensor histidine kinase which is autophosphorylated, in the absence of oxygen, probably at the conserved histidine residue, and transfers its phosphate group probably to a conserved aspartate residue of NreC. NreB/NreC activates the expression of the nitrate (narGHJI) and nitrite (nir) reductase operons, as well as the putative nitrate transporter gene narT. In Staphylococcus aureus (strain JH1), this protein is Oxygen sensor histidine kinase NreB (nreB).